Consider the following 560-residue polypeptide: Kinesin light chain 1 (560 aa).

The stretch at 31–99 forms a coiled coil; sequence VIQGLEALKN…MALSNHLNAV (69 aa). Residues 155–176 are compositionally biased toward basic and acidic residues; sequence KKYDDDISPSEDKDTDSTKEPL. The interval 155 to 203 is disordered; sequence KKYDDDISPSEDKDTDSTKEPLDDLFPNDEDDPGQGIQQQHSSAAAAAQ. A Phosphoserine modification is found at S162. The segment covering 192–203 has biased composition (low complexity); that stretch reads QQQHSSAAAAAQ. TPR repeat units follow at residues 213 to 246, 255 to 288, 297 to 330, 339 to 372, and 381 to 414; these read LRTL…LEKT, ATML…REKT, AATL…REKV, AKQL…YQTK, and AKTK…AHER. Y449 carries the post-translational modification Phosphotyrosine. Position 460 is a phosphoserine (S460). One copy of the TPR 6 repeat lies at 464–497; that stretch reads TTTLKNLGALYRRQGKFEAAETLEEAAMRSRKQG. Residues S521 and S524 each carry the phosphoserine; by AMPK modification.

Belongs to the kinesin light chain family. As to quaternary structure, oligomeric complex composed of two heavy chains and two light chains. Interacts with SPAG9. Interacts with ATCAY; may link mitochondria to KLC1 and regulate mitochondria localization into neuron projections. Interacts (via TPR repeats) with TOR1A; the interaction associates TOR1A with the kinesin oligomeric complex. Interacts with BORCS5. Interacts with MAPK8IP3/JIP3 and NTRK2/TRKB; interaction with NTRK2/TRKB is mediated by MAPK8IP3/JIP3. Interacts with CLSTN1; phosphorylation at Ser-460 inhibits interaction with CLSTN1. In terms of processing, phosphorylation at Ser-460 by ERK inhibits interaction with CLSTN1 and localization to cytoplasmic vesicles.

The protein resides in the cell projection. The protein localises to the growth cone. It is found in the cytoplasmic vesicle. It localises to the cytoplasm. Its subcellular location is the cytoskeleton. Its function is as follows. Kinesin is a microtubule-associated force-producing protein that may play a role in organelle transport. The light chain may function in coupling of cargo to the heavy chain or in the modulation of its ATPase activity. This Pongo abelii (Sumatran orangutan) protein is Kinesin light chain 1 (KLC1).